The following is a 370-amino-acid chain: Probable pectin lyase E (370 aa).

A disulfide bridge connects residues cysteine 75 and cysteine 96. The active site involves arginine 245. Asparagine 307 is a glycosylation site (N-linked (GlcNAc...) asparagine). A disulfide bridge links cysteine 311 with cysteine 319.

This sequence belongs to the polysaccharide lyase 1 family.

The protein localises to the secreted. It catalyses the reaction Eliminative cleavage of (1-&gt;4)-alpha-D-galacturonan methyl ester to give oligosaccharides with 4-deoxy-6-O-methyl-alpha-D-galact-4-enuronosyl groups at their non-reducing ends.. Pectinolytic enzymes consist of four classes of enzymes: pectin lyase, polygalacturonase, pectin methylesterase and rhamnogalacturonase. Among pectinolytic enzymes, pectin lyase is the most important in depolymerization of pectin, since it cleaves internal glycosidic bonds of highly methylated pectins. This Aspergillus niger protein is Probable pectin lyase E (pelE).